We begin with the raw amino-acid sequence, 251 residues long: Diphthine synthase (251 aa).

S-adenosyl-L-methionine contacts are provided by residues Asp-83, Leu-86, 111-112 (SI), Leu-163, and Leu-205.

This sequence belongs to the diphthine synthase family. In terms of assembly, homodimer.

The catalysed reaction is 2-[(3S)-amino-3-carboxypropyl]-L-histidyl-[translation elongation factor 2] + 3 S-adenosyl-L-methionine = diphthine-[translation elongation factor 2] + 3 S-adenosyl-L-homocysteine + 3 H(+). It functions in the pathway protein modification; peptidyl-diphthamide biosynthesis. S-adenosyl-L-methionine-dependent methyltransferase that catalyzes the trimethylation of the amino group of the modified target histidine residue in translation elongation factor 2 (EF-2), to form an intermediate called diphthine. The three successive methylation reactions represent the second step of diphthamide biosynthesis. This chain is Diphthine synthase, found in Pyrobaculum calidifontis (strain DSM 21063 / JCM 11548 / VA1).